The chain runs to 1073 residues: Ubiquitin carboxyl-terminal hydrolase 53 (1073 aa).

In terms of domain architecture, USP spans 30–351 (KGLLNEPGQN…QPLLLFYANP (322 aa)). Residue C41 is the Nucleophile of the active site. H66, C68, C73, C76, H132, C144, C149, H152, C165, C168, C224, and C228 together coordinate Zn(2+). H301 serves as the catalytic Proton acceptor. Disordered regions lie at residues 391–437 (LKEN…HIDQ) and 485–636 (LSHF…PKQK). A compositionally biased stretch (polar residues) spans 407–418 (KFPTDNISSSNR). Residues 524–541 (QSRASAQIISSSKSQILA) are compositionally biased toward low complexity. Residues 553 to 563 (DNGTGYDTDSS) are compositionally biased toward polar residues. Residues 612–627 (NISNKPKSSKDPSFSN) are compositionally biased toward low complexity.

This sequence belongs to the peptidase C19 family. As to quaternary structure, interacts (via the C-terminal region) with the heterodimer TJP1:TJP2. As to expression, expressed predominantly in skeletal muscle and heart.

The protein resides in the cell junction. It is found in the tight junction. It carries out the reaction Thiol-dependent hydrolysis of ester, thioester, amide, peptide and isopeptide bonds formed by the C-terminal Gly of ubiquitin (a 76-residue protein attached to proteins as an intracellular targeting signal).. Its function is as follows. Deubiquitinase that mediates 'Lys-63'-linked deubiquitination of tight junction proteins, such as MARVELD2 and LSR, and which is involved in the survival of auditory hair cells and hearing. Specifically cleaves 'Lys-63'-linked polyubiquitin chains composed of at least 3 ubiquitin molecules, while it is not able to deubiquitinate substrates with shorter ubiquitin chains: recognizes ubiquitin chain in position S2 and catalyzes en bloc cleavage of polyubiquitin chains from substrate proteins. Probably acts by modulating the barrier properties and mechanical stability of tight junctions via deubiquitination of MARVELD2 and LSR. This Homo sapiens (Human) protein is Ubiquitin carboxyl-terminal hydrolase 53.